The sequence spans 955 residues: RNA polymerase-associated protein RapA (955 aa).

The Helicase ATP-binding domain occupies 163-333; the sequence is EVGHRYAPRV…FARLRLLDPE (171 aa). ATP is bound at residue 176-183; sequence DEVGLGKT. Residues 279 to 282 carry the DEAH box motif; that stretch reads DEAH. The region spanning 478-642 is the Helicase C-terminal domain; the sequence is RVDWLLELLL…AVRDELFELL (165 aa).

It belongs to the SNF2/RAD54 helicase family. RapA subfamily. Interacts with the RNAP. Has a higher affinity for the core RNAP than for the holoenzyme. Its ATPase activity is stimulated by binding to RNAP.

Functionally, transcription regulator that activates transcription by stimulating RNA polymerase (RNAP) recycling in case of stress conditions such as supercoiled DNA or high salt concentrations. Probably acts by releasing the RNAP, when it is trapped or immobilized on tightly supercoiled DNA. Does not activate transcription on linear DNA. Probably not involved in DNA repair. This chain is RNA polymerase-associated protein RapA, found in Aeromonas salmonicida (strain A449).